A 221-amino-acid polypeptide reads, in one-letter code: CDC5 pindle pole body anchor protein 1 (221 aa).

The disordered stretch occupies residues 142–221 (KNIERDNLKP…PTEDSVPHAE (80 aa)). Phosphoserine occurs at positions 158, 170, and 175. The CDC5-binding motif lies at 165–170 (PLVTSS). Positions 166–188 (LVTSSPIHMSPLQSRQRPVSSLQ) are enriched in polar residues. The CLB3-docking motif lies at 189 to 195 (PPKGPNF). Positions 200–202 (PKL) match the CDC14-binding motif.

As to quaternary structure, interacts with CDC5 and CDC14. Post-translationally, phosphorylated by CLB3-CDK1 in metaphase which is required for correct localization at the nuclear envelop and the spindle pole body, and dephosphorylated by CDC14 in early anaphase.

It localises to the nucleus membrane. Its subcellular location is the cytoplasm. It is found in the cytoskeleton. The protein resides in the microtubule organizing center. The protein localises to the spindle pole body. Functionally, specialized component of the nuclear membrane that may be involved in the connection of the spindle pole body (SPB) to the nuclear envelope. Recruits CDC5 to spindle pole bodies in metaphase. This Saccharomyces cerevisiae (strain ATCC 204508 / S288c) (Baker's yeast) protein is CDC5 pindle pole body anchor protein 1.